We begin with the raw amino-acid sequence, 487 residues long: GDP-Man:Man(3)GlcNAc(2)-PP-Dol alpha-1,2-mannosyltransferase (487 aa).

The Lumenal portion of the chain corresponds to 1–16 (MAGILCLCGMMRLLTA). A helical transmembrane segment spans residues 17 to 37 (LFIPVLIASIGLCLVLVLLFI). At 38–231 (CTRLWIQRKK…SNNPVLSRLK (194 aa)) the chain is on the cytoplasmic side. An intramembrane region (helical) is located at residues 232–252 (LIYYYLFAVIYGWVGSCSDVI). The Cytoplasmic portion of the chain corresponds to 253 to 394 (MVNSTWTFAH…IGLHTMWNEH (142 aa)). Residues 395–415 (FGIGIVECMAAGTIILAHNSG) constitute an intramembrane region (helical). Over 416–487 (GPKLDIVVPY…FLASSEPLFM (72 aa)) the chain is Cytoplasmic.

Belongs to the glycosyltransferase group 1 family. Glycosyltransferase 4 subfamily.

The protein localises to the endoplasmic reticulum membrane. The catalysed reaction is an alpha-D-Man-(1-&gt;3)-[alpha-D-Man-(1-&gt;6)]-beta-D-Man-(1-&gt;4)-beta-D-GlcNAc-(1-&gt;4)-alpha-D-GlcNAc-diphospho-di-trans,poly-cis-dolichol + 2 GDP-alpha-D-mannose = an alpha-D-Man-(1-&gt;2)-alpha-D-Man-(1-&gt;2)-alpha-D-Man-(1-&gt;3)-[alpha-D-Man-(1-&gt;6)]-beta-D-Man-(1-&gt;4)-beta-D-GlcNAc-(1-&gt;4)-alpha-D-GlcNAc-diphospho-di-trans,poly-cis-dolichol + 2 GDP + 2 H(+). It participates in protein modification; protein glycosylation. GDP-Man:Man(3)GlcNAc(2)-PP-Dol alpha-1,2-mannosyltransferase that operates in the biosynthetic pathway of dolichol-linked oligosaccharides, the glycan precursors employed in protein asparagine (N)-glycosylation. The assembly of dolichol-linked oligosaccharides begins on the cytosolic side of the endoplasmic reticulum membrane and finishes in its lumen. The sequential addition of sugars to dolichol pyrophosphate produces dolichol-linked oligosaccharides containing fourteen sugars, including two GlcNAcs, nine mannoses and three glucoses. Once assembled, the oligosaccharide is transferred from the lipid to nascent proteins by oligosaccharyltransferases. Catalyzes, on the cytoplasmic face of the endoplasmic reticulum, the addition of the fourth and fifth mannose residues to the dolichol-linked oligosaccharide chain, to produce Man(5)GlcNAc(2)-PP-dolichol core oligosaccharide. Man(5)GlcNAc(2)-PP-dolichol is a substrate for ALG3, the following enzyme in the biosynthetic pathway. The polypeptide is GDP-Man:Man(3)GlcNAc(2)-PP-Dol alpha-1,2-mannosyltransferase (alg11) (Xenopus tropicalis (Western clawed frog)).